The sequence spans 337 residues: Putative long-chain-alcohol O-fatty-acyltransferase 10 (337 aa).

The next 8 membrane-spanning stretches (helical) occupy residues 7-27, 38-58, 59-79, 82-102, 142-162, 228-248, 254-274, and 285-305; these read SFVK…YIPS, SVLP…FTIF, SSTT…LFAF, GPLL…CLPI, ILLL…LLTI, MGCM…YFYI, TLEV…EIAV, and MLLR…LFFG.

Belongs to the wax synthase family.

The protein resides in the membrane. The catalysed reaction is a long chain fatty alcohol + a fatty acyl-CoA = a wax ester + CoA. Its function is as follows. Catalyzes the final step in the synthesis of long-chain linear esters (waxes). The chain is Putative long-chain-alcohol O-fatty-acyltransferase 10 from Arabidopsis thaliana (Mouse-ear cress).